A 274-amino-acid polypeptide reads, in one-letter code: Penicillin-insensitive murein endopeptidase (274 aa).

The first 19 residues, 1-19 (MNKTAIALLALLASSASLA), serve as a signal peptide directing secretion. 3 cysteine pairs are disulfide-bonded: C44–C265, C187–C235, and C216–C223. Residues H110, H113, D120, D147, H150, and H211 each contribute to the Zn(2+) site. The interval 227 to 274 (PLPPPGDGCGAELQSWFEPPKPGTTKPEKKTPPPLPPSCQALLDEHVI) is disordered.

It belongs to the peptidase M74 family. Dimer. It depends on Zn(2+) as a cofactor.

The protein localises to the periplasm. In terms of biological role, murein endopeptidase that cleaves the D-alanyl-meso-2,6-diamino-pimelyl amide bond that connects peptidoglycan strands. Likely plays a role in the removal of murein from the sacculus. This is Penicillin-insensitive murein endopeptidase from Escherichia coli (strain SE11).